The following is an 862-amino-acid chain: Rab GTPase-binding effector protein 1 (862 aa).

Alanine 2 carries the post-translational modification N-acetylalanine. Residues 11 to 345 are a coiled coil; that stretch reads DVSLQQRVAE…KKADVEEEIK (335 aa). At lysine 282 the chain carries N6-acetyllysine. A disordered region spans residues 315–338; that stretch reads ELKKKDQEDDEQQRLNKRKDHKKA. Phosphoserine occurs at positions 374, 377, and 407. At threonine 408 the chain carries Phosphothreonine. Serine 410 is modified (phosphoserine). Residues 435 to 447 are interaction with AP1G1, AP1G2, GGA1, GGA2 and GGA3; it reads DESDFGPLVGADS. Residues 534 to 816 are a coiled coil; sequence DMCSNYEKQL…LQTELDVSEQ (283 aa).

It belongs to the rabaptin family. In terms of assembly, homodimer when bound to RAB5A. Heterodimer with RABGEF1. The heterodimer binds RAB4A and RAB5A that have been activated by GTP-binding. Interacts with TSC2. Interacts with GGA1 (via GAE domain), GGA2 (via GAE domain) and GGA3 (via GAE domain). Interacts with AP1G1 (via GAE domain). Interacts with AP1G2 (via GAE domain). Interacts with ECPAS. Interacts with KCNH1. Interacts with PKD1 (via C-terminal domain) and GGA1; the interactions recruit PKD1:PKD2 complex to GGA1 and ARL3 at trans-Golgi network. In terms of processing, proteolytic cleavage by caspases in apoptotic cells causes loss of endosome fusion activity.

The protein localises to the cytoplasm. The protein resides in the early endosome. Its subcellular location is the recycling endosome. It is found in the cytoplasmic vesicle. Rab effector protein acting as linker between gamma-adaptin, RAB4A and RAB5A. Involved in endocytic membrane fusion and membrane trafficking of recycling endosomes. Involved in KCNH1 channels trafficking to and from the cell membrane. Stimulates RABGEF1 mediated nucleotide exchange on RAB5A. Mediates the traffic of PKD1:PKD2 complex from the endoplasmic reticulum through the Golgi to the cilium. In Homo sapiens (Human), this protein is Rab GTPase-binding effector protein 1 (RABEP1).